Reading from the N-terminus, the 231-residue chain is Ribose-5-phosphate isomerase A (231 aa).

Residues 32 to 35 (TGST), 85 to 88 (DGAD), and 98 to 101 (KGGG) contribute to the substrate site. Glu-107 functions as the Proton acceptor in the catalytic mechanism. Lys-125 contacts substrate.

The protein belongs to the ribose 5-phosphate isomerase family. As to quaternary structure, homodimer.

It catalyses the reaction aldehydo-D-ribose 5-phosphate = D-ribulose 5-phosphate. Its pathway is carbohydrate degradation; pentose phosphate pathway; D-ribose 5-phosphate from D-ribulose 5-phosphate (non-oxidative stage): step 1/1. Catalyzes the reversible conversion of ribose-5-phosphate to ribulose 5-phosphate. This Paraburkholderia phytofirmans (strain DSM 17436 / LMG 22146 / PsJN) (Burkholderia phytofirmans) protein is Ribose-5-phosphate isomerase A.